A 34-amino-acid chain; its full sequence is Photosystem II reaction center protein M (34 aa).

Residues 5-25 traverse the membrane as a helical segment; it reads ILAFIATALFILIPTAFSLIL.

This sequence belongs to the PsbM family. As to quaternary structure, PSII is composed of 1 copy each of membrane proteins PsbA, PsbB, PsbC, PsbD, PsbE, PsbF, PsbH, PsbI, PsbJ, PsbK, PsbL, PsbM, PsbT, PsbX, PsbY, PsbZ, Psb30/Ycf12, at least 3 peripheral proteins of the oxygen-evolving complex and a large number of cofactors. It forms dimeric complexes.

It is found in the plastid. It localises to the chloroplast thylakoid membrane. One of the components of the core complex of photosystem II (PSII). PSII is a light-driven water:plastoquinone oxidoreductase that uses light energy to abstract electrons from H(2)O, generating O(2) and a proton gradient subsequently used for ATP formation. It consists of a core antenna complex that captures photons, and an electron transfer chain that converts photonic excitation into a charge separation. This subunit is found at the monomer-monomer interface. The chain is Photosystem II reaction center protein M from Huperzia lucidula (Shining clubmoss).